The primary structure comprises 190 residues: MRFFPTGRSMSLEQNYTEILSQIGEDVSREGLLDTPKRAAKAMKYLCRGYEQTLEEVTNNALFSSDNSEMVLVRDIELYSMCEHHMLPFIGKAHVAYLPKGKVLGLSKVARIVDMYARRLQIQENLSRQIAEAVQQVTGAAGVAVVVEAKHMCMMMRGVEKQNSTMITSVMLGEFRDNAATRSEFLSLIK.

This sequence belongs to the GTP cyclohydrolase I family. Homomer.

It catalyses the reaction GTP + H2O = 7,8-dihydroneopterin 3'-triphosphate + formate + H(+). It functions in the pathway cofactor biosynthesis; 7,8-dihydroneopterin triphosphate biosynthesis; 7,8-dihydroneopterin triphosphate from GTP: step 1/1. This chain is GTP cyclohydrolase 1 1, found in Pseudomonas putida (strain ATCC 47054 / DSM 6125 / CFBP 8728 / NCIMB 11950 / KT2440).